The chain runs to 306 residues: MDIYSAATLLAEFVLGIIIFPKFIDYMKKLKLGQYIRQEGPDLHNYKEGTPTAGGIVFISLTVIAGLILKLPKELIFTLLFYGFIGFLDDFVSIVKKRSLGLRAWQKLALQFLFSIWIAYTILQYRTSSIFGITVPSWLFYLFTMLLVSGYSNATNLTDGIDGLAGWVFVTSMIPFMFFSKSSMEYKAIFVIIMPLLSFLVYNTRPAKVFMGDTGSLALGAYISTYALMTNNELSLLFFTPIFLLETISVILQVSSYKLRGKRLFKMAPIHHHFELLGWKEEKIVGVFSAWNLAIAIFYIAFFLNR.

Helical transmembrane passes span 1-21, 49-69, 75-95, 104-124, 130-150, 160-180, 182-202, 209-229, 234-254, and 284-304; these read MDIY…IIFP, GTPT…GLIL, LIFT…VSIV, AWQK…TILQ, IFGI…LVSG, GIDG…MFFS, SSME…FLVY, VFMG…YALM, LSLL…ILQV, and IVGV…AFFL.

Belongs to the glycosyltransferase 4 family. MraY subfamily. Mg(2+) serves as cofactor.

The protein localises to the cell inner membrane. It carries out the reaction UDP-N-acetyl-alpha-D-muramoyl-L-alanyl-gamma-D-glutamyl-meso-2,6-diaminopimeloyl-D-alanyl-D-alanine + di-trans,octa-cis-undecaprenyl phosphate = di-trans,octa-cis-undecaprenyl diphospho-N-acetyl-alpha-D-muramoyl-L-alanyl-D-glutamyl-meso-2,6-diaminopimeloyl-D-alanyl-D-alanine + UMP. It participates in cell wall biogenesis; peptidoglycan biosynthesis. In terms of biological role, catalyzes the initial step of the lipid cycle reactions in the biosynthesis of the cell wall peptidoglycan: transfers peptidoglycan precursor phospho-MurNAc-pentapeptide from UDP-MurNAc-pentapeptide onto the lipid carrier undecaprenyl phosphate, yielding undecaprenyl-pyrophosphoryl-MurNAc-pentapeptide, known as lipid I. This Fervidobacterium nodosum (strain ATCC 35602 / DSM 5306 / Rt17-B1) protein is Phospho-N-acetylmuramoyl-pentapeptide-transferase.